A 141-amino-acid chain; its full sequence is Lutropin subunit beta (141 aa).

Residues 1–20 (MEMLQGLLLLLLLSMGGAWA) form the signal peptide. Intrachain disulfides connect cysteine 29-cysteine 77, cysteine 43-cysteine 92, cysteine 46-cysteine 130, cysteine 54-cysteine 108, cysteine 58-cysteine 110, and cysteine 113-cysteine 120. 2 N-linked (GlcNAc...) asparagine glycosylation sites follow: asparagine 33 and asparagine 50.

Belongs to the glycoprotein hormones subunit beta family. In terms of assembly, heterodimer of a common alpha chain and a unique beta chain which confers biological specificity to thyrotropin, lutropin, follitropin and gonadotropin.

The protein resides in the secreted. Promotes spermatogenesis and ovulation by stimulating the testes and ovaries to synthesize steroids. This is Lutropin subunit beta (LHB) from Gorilla gorilla gorilla (Western lowland gorilla).